The primary structure comprises 396 residues: Adenylyltransferase and sulfurtransferase UBA4 (396 aa).

ATP is bound by residues Gly51, Asp72, 79–83 (SNLHR), Lys95, and 139–140 (DG). Residues Cys180 and Cys183 each coordinate Zn(2+). Cys197 serves as the catalytic Glycyl thioester intermediate; for adenylyltransferase activity. Cys257 and Cys260 together coordinate Zn(2+). One can recognise a Rhodanese domain in the interval 305-394 (VSTKHILLDV…WAKNVDEKFP (90 aa)). Cys355 serves as the catalytic Cysteine persulfide intermediate; for sulfurtransferase activity.

The protein in the N-terminal section; belongs to the HesA/MoeB/ThiF family. UBA4 subfamily. It depends on Zn(2+) as a cofactor.

It localises to the cytoplasm. It is found in the cytosol. It participates in tRNA modification; 5-methoxycarbonylmethyl-2-thiouridine-tRNA biosynthesis. In terms of biological role, plays a central role in 2-thiolation of mcm(5)S(2)U at tRNA wobble positions of cytosolic tRNA(Lys), tRNA(Glu) and tRNA(Gln). Acts by mediating the C-terminal thiocarboxylation of sulfur carrier URM1. Its N-terminus first activates URM1 as acyl-adenylate (-COAMP), then the persulfide sulfur on the catalytic cysteine is transferred to URM1 to form thiocarboxylation (-COSH) of its C-terminus. The reaction probably involves hydrogen sulfide that is generated from the persulfide intermediate and that acts as a nucleophile towards URM1. Subsequently, a transient disulfide bond is formed. Does not use thiosulfate as sulfur donor; NFS1 probably acting as a sulfur donor for thiocarboxylation reactions. Prior mcm(5) tRNA modification by the elongator complex is required for 2-thiolation. May also be involved in protein urmylation. This chain is Adenylyltransferase and sulfurtransferase UBA4, found in Yarrowia lipolytica (strain CLIB 122 / E 150) (Yeast).